Here is a 1492-residue protein sequence, read N- to C-terminus: Neogenin (1492 aa).

The N-terminal stretch at 1 to 36 (MAAEREAGRLLCTSSSRRCCPPPPLLLLLPLLLLLG) is a signal peptide. Topologically, residues 37 to 1136 (RPASGAAATK…PTSPLDSNML (1100 aa)) are extracellular. 4 consecutive Ig-like C2-type domains span residues 63–158 (PFYF…AKLT), 163–249 (PRFT…AELK), 254–347 (PEEI…AELT), and 352–437 (PGFL…AQLI). N-linked (GlcNAc...) asparagine glycosylation occurs at Asn84. 3 disulfides stabilise this stretch: Cys85/Cys140, Cys184/Cys232, and Cys281/Cys331. Asn221 is a glycosylation site (N-linked (GlcNAc...) asparagine). Asn337 carries N-linked (GlcNAc...) asparagine glycosylation. A disulfide bridge links Cys373 with Cys421. Fibronectin type-III domains are found at residues 472-566 (APRD…TQPE), 572-662 (PAPN…TLSD), 667-762 (APQN…TFES), 772-862 (VPSS…RPHT), 887-986 (PPVG…LVPT), and 988-1085 (PPKD…TPKA). N-linked (GlcNAc...) asparagine glycans are attached at residues Asn501 and Asn520. Asn670 and Asn746 each carry an N-linked (GlcNAc...) asparagine glycan. A glycan (N-linked (GlcNAc...) asparagine) is linked at Asn940. Positions 1072 to 1128 (GPMSEAVQFRTPKADSSDKMPNDQALGSAGKGSRLPDLGSDYKPPMSGSNSPHGSPT) are disordered. Over residues 1083 to 1092 (PKADSSDKMP) the composition is skewed to basic and acidic residues. The segment covering 1118–1128 (SGSNSPHGSPT) has biased composition (polar residues). Residues 1137–1157 (LVIIVSVGVITIVVVVVIAVF) traverse the membrane as a helical segment. Residues 1158-1492 (CTRRTTSHQK…MKDLNAITTA (335 aa)) lie on the Cytoplasmic side of the membrane. Disordered regions lie at residues 1205-1237 (PIDKSPDPNPVMTDTPIPRNSQDITPVDNSMDS), 1266-1300 (PKMMMPFDSQPPQPVISAHPIHSLDNPHHHFHSSS), and 1321-1396 (SMSL…FAVP). Ser1209 and Ser1225 each carry phosphoserine. A compositionally biased stretch (polar residues) spans 1222–1237 (PRNSQDITPVDNSMDS). Phosphothreonine is present on Thr1229. Composition is skewed to polar residues over residues 1321–1353 (SMSLSDRANSTESVRNTPSTDTMPASSSQTCCT) and 1361–1380 (ATSSSYLASSQEEDSGQSLP). A Phosphoserine modification is found at Ser1432. Thr1435 carries the post-translational modification Phosphothreonine. Residues Ser1463, Ser1465, and Ser1466 each carry the phosphoserine modification.

Belongs to the immunoglobulin superfamily. DCC family. As to quaternary structure, interacts with BMP2, BMP4, BMP6, and BMP7. Interacts with RGMA and RGMB. Interacts with MYO10. As to expression, widely expressed.

It is found in the cell membrane. Its function is as follows. Multi-functional cell surface receptor regulating cell adhesion in many diverse developmental processes, including neural tube and mammary gland formation, myogenesis and angiogenesis. Receptor for members of the BMP, netrin, and repulsive guidance molecule (RGM) families. Netrin-Neogenin interactions result in a chemoattractive axon guidance response and cell-cell adhesion, the interaction between NEO1/Neogenin and RGMa and RGMb induces a chemorepulsive response. This Mus musculus (Mouse) protein is Neogenin.